The following is an 871-amino-acid chain: DNA mismatch repair protein MutS (871 aa).

618–625 (GPNMSGKS) is an ATP binding site.

Belongs to the DNA mismatch repair MutS family.

Its function is as follows. This protein is involved in the repair of mismatches in DNA. It is possible that it carries out the mismatch recognition step. This protein has a weak ATPase activity. The polypeptide is DNA mismatch repair protein MutS (Christiangramia forsetii (strain DSM 17595 / CGMCC 1.15422 / KT0803) (Gramella forsetii)).